The following is a 577-amino-acid chain: Dihydroxy-acid dehydratase (577 aa).

Basic and acidic residues predominate over residues 1-10 (MLKRSFDKSK). Residues 1-22 (MLKRSFDKSKLPSRHVTEGPSR) form a disordered region. Cys-56 provides a ligand contact to [2Fe-2S] cluster. Asp-88 contacts Mg(2+). Residue Cys-129 participates in [2Fe-2S] cluster binding. 2 residues coordinate Mg(2+): Asp-130 and Lys-131. The residue at position 131 (Lys-131) is an N6-carboxylysine. A [2Fe-2S] cluster-binding site is contributed by Cys-201. Glu-453 serves as a coordination point for Mg(2+). Ser-479 (proton acceptor) is an active-site residue.

This sequence belongs to the IlvD/Edd family. In terms of assembly, homodimer. Requires [2Fe-2S] cluster as cofactor. It depends on Mg(2+) as a cofactor.

The enzyme catalyses (2R)-2,3-dihydroxy-3-methylbutanoate = 3-methyl-2-oxobutanoate + H2O. The catalysed reaction is (2R,3R)-2,3-dihydroxy-3-methylpentanoate = (S)-3-methyl-2-oxopentanoate + H2O. It functions in the pathway amino-acid biosynthesis; L-isoleucine biosynthesis; L-isoleucine from 2-oxobutanoate: step 3/4. It participates in amino-acid biosynthesis; L-valine biosynthesis; L-valine from pyruvate: step 3/4. Functionally, functions in the biosynthesis of branched-chain amino acids. Catalyzes the dehydration of (2R,3R)-2,3-dihydroxy-3-methylpentanoate (2,3-dihydroxy-3-methylvalerate) into 2-oxo-3-methylpentanoate (2-oxo-3-methylvalerate) and of (2R)-2,3-dihydroxy-3-methylbutanoate (2,3-dihydroxyisovalerate) into 2-oxo-3-methylbutanoate (2-oxoisovalerate), the penultimate precursor to L-isoleucine and L-valine, respectively. This chain is Dihydroxy-acid dehydratase, found in Dinoroseobacter shibae (strain DSM 16493 / NCIMB 14021 / DFL 12).